The sequence spans 296 residues: Cobalamin trafficking protein CblD (296 aa).

A mitochondrion-targeting transit peptide spans 1–38 (MAHVLCNRARLVSYLPGFCSLVKRVINPRAFSTAGSSG). Lys-203 carries the post-translational modification N6-acetyllysine.

Heterodimer with MMACHC. Forms a multiprotein complex with MMACHC, MTR and MTRR.

It localises to the cytoplasm. The protein resides in the mitochondrion. Functionally, involved in cobalamin metabolism and trafficking. Plays a role in regulating the biosynthesis and the proportion of two coenzymes, methylcob(III)alamin (MeCbl) and 5'-deoxyadenosylcobalamin (AdoCbl). Promotes oxidation of cob(II)alamin bound to MMACHC. The processing of cobalamin in the cytosol occurs in a multiprotein complex composed of at least MMACHC, MMADHC, MTRR (methionine synthase reductase) and MTR (methionine synthase) which may contribute to shuttle safely and efficiently cobalamin towards MTR in order to produce methionine. This is Cobalamin trafficking protein CblD (Mmadhc) from Rattus norvegicus (Rat).